Here is a 535-residue protein sequence, read N- to C-terminus: Bifunctional purine biosynthesis protein PurH (535 aa).

Residues 6–151 form the MGS-like domain; sequence TRLPIRRALI…KNHKDVAIVV (146 aa).

It belongs to the PurH family.

The catalysed reaction is (6R)-10-formyltetrahydrofolate + 5-amino-1-(5-phospho-beta-D-ribosyl)imidazole-4-carboxamide = 5-formamido-1-(5-phospho-D-ribosyl)imidazole-4-carboxamide + (6S)-5,6,7,8-tetrahydrofolate. The enzyme catalyses IMP + H2O = 5-formamido-1-(5-phospho-D-ribosyl)imidazole-4-carboxamide. The protein operates within purine metabolism; IMP biosynthesis via de novo pathway; 5-formamido-1-(5-phospho-D-ribosyl)imidazole-4-carboxamide from 5-amino-1-(5-phospho-D-ribosyl)imidazole-4-carboxamide (10-formyl THF route): step 1/1. It participates in purine metabolism; IMP biosynthesis via de novo pathway; IMP from 5-formamido-1-(5-phospho-D-ribosyl)imidazole-4-carboxamide: step 1/1. The polypeptide is Bifunctional purine biosynthesis protein PurH (Pseudomonas entomophila (strain L48)).